We begin with the raw amino-acid sequence, 143 residues long: MELSPNNQIEDRKPILTADGLVQTSNSPFEPTISQETQTSNGIGTQCQLTVDQLDIEILPIIYDVVRCVEKDPLENAVKLRESQDCNHKIFELQKRFESAREQIRQLPGIDYNKDEQLQRLELLRNQFKLKQQLIRKYKDTEF.

A coiled-coil region spans residues Q84 to T141.

This sequence belongs to the Mediator complex subunit 9 family. Component of the Mediator complex.

The protein resides in the nucleus. Functionally, component of the Mediator complex, a coactivator involved in the regulated transcription of nearly all RNA polymerase II-dependent genes. Mediator functions as a bridge to convey information from gene-specific regulatory proteins to the basal RNA polymerase II transcription machinery. Mediator is recruited to promoters by direct interactions with regulatory proteins and serves as a scaffold for the assembly of a functional preinitiation complex with RNA polymerase II and the general transcription factors. The protein is Mediator of RNA polymerase II transcription subunit 9 (MED9) of Drosophila pseudoobscura pseudoobscura (Fruit fly).